We begin with the raw amino-acid sequence, 142 residues long: 5a,11a-dehydrotetracycline/5a,11a-dehydrooxytetracycline reductase (142 aa).

This sequence belongs to the pyridoxamine 5'-phosphate oxidase family.

The catalysed reaction is tetracycline + oxidized coenzyme F420-(gamma-L-Glu)(n) + H(+) = 5a,11a-dehydrotetracycline + reduced coenzyme F420-(gamma-L-Glu)(n). It carries out the reaction oxytetracycline + oxidized coenzyme F420-(gamma-L-Glu)(n) + H(+) = 5a,11a-dehydrooxytetracycline + reduced coenzyme F420-(gamma-L-Glu)(n). It participates in antibiotic biosynthesis; oxytetracycline biosynthesis. Functionally, involved in the biosynthesis of the antibiotics tetracycline and oxytetracycline. Catalyzes the C(5) reduction of 5a,11a-dehydrooxytetracycline to yield oxytetracycline as a major product. Also catalyzes the C(12) reduction of 5a,11a-dehydrotetracycline (12-dehydrotetracycline) to produce tetracycline as a minor product. This is 5a,11a-dehydrotetracycline/5a,11a-dehydrooxytetracycline reductase from Streptomyces rimosus subsp. rimosus (strain ATCC 10970 / DSM 40260 / JCM 4667 / NRRL 2234).